The primary structure comprises 187 residues: MLEILKESLLTCPMVKREKDGVVYNYFINPLTDGIPEVTAELLRDVTAAMMVSLDLKNVDKIVVSEAMGIHIGTALTLATGIPFVVIRKREYRLPGEVVIGQETGYSKGTLYMNCVHKGDRVVIIDDVISTGGTIKGILPALKIAGAELVDILFVVNRGSPDIGIPYKTLVTIDVDENGVKIIDSAF.

This sequence belongs to the purine/pyrimidine phosphoribosyltransferase family. Archaeal HPRT subfamily. As to quaternary structure, homodimer.

The protein localises to the cytoplasm. The enzyme catalyses IMP + diphosphate = hypoxanthine + 5-phospho-alpha-D-ribose 1-diphosphate. It catalyses the reaction GMP + diphosphate = guanine + 5-phospho-alpha-D-ribose 1-diphosphate. The protein operates within purine metabolism; IMP biosynthesis via salvage pathway; IMP from hypoxanthine: step 1/1. Catalyzes a salvage reaction resulting in the formation of IMP that is energically less costly than de novo synthesis. In Methanocorpusculum labreanum (strain ATCC 43576 / DSM 4855 / Z), this protein is Hypoxanthine/guanine phosphoribosyltransferase.